The following is a 336-amino-acid chain: Aspartate carbamoyltransferase catalytic subunit (336 aa).

Carbamoyl phosphate-binding residues include R72 and T73. L-aspartate is bound at residue K100. The carbamoyl phosphate site is built by R122, H152, and Q155. L-aspartate is bound by residues R185 and R240. Carbamoyl phosphate-binding residues include G281 and P282.

This sequence belongs to the aspartate/ornithine carbamoyltransferase superfamily. ATCase family. As to quaternary structure, heterododecamer (2C3:3R2) of six catalytic PyrB chains organized as two trimers (C3), and six regulatory PyrI chains organized as three dimers (R2).

The enzyme catalyses carbamoyl phosphate + L-aspartate = N-carbamoyl-L-aspartate + phosphate + H(+). It functions in the pathway pyrimidine metabolism; UMP biosynthesis via de novo pathway; (S)-dihydroorotate from bicarbonate: step 2/3. Its function is as follows. Catalyzes the condensation of carbamoyl phosphate and aspartate to form carbamoyl aspartate and inorganic phosphate, the committed step in the de novo pyrimidine nucleotide biosynthesis pathway. This Marinobacter nauticus (strain ATCC 700491 / DSM 11845 / VT8) (Marinobacter aquaeolei) protein is Aspartate carbamoyltransferase catalytic subunit.